Consider the following 357-residue polypeptide: UDP-N-acetylglucosamine--N-acetylmuramyl-(pentapeptide) pyrophosphoryl-undecaprenol N-acetylglucosamine transferase (357 aa).

UDP-N-acetyl-alpha-D-glucosamine is bound by residues 13–15 (TGG), N125, R161, S189, I243, and Q288.

It belongs to the glycosyltransferase 28 family. MurG subfamily.

The protein localises to the cell inner membrane. The enzyme catalyses di-trans,octa-cis-undecaprenyl diphospho-N-acetyl-alpha-D-muramoyl-L-alanyl-D-glutamyl-meso-2,6-diaminopimeloyl-D-alanyl-D-alanine + UDP-N-acetyl-alpha-D-glucosamine = di-trans,octa-cis-undecaprenyl diphospho-[N-acetyl-alpha-D-glucosaminyl-(1-&gt;4)]-N-acetyl-alpha-D-muramoyl-L-alanyl-D-glutamyl-meso-2,6-diaminopimeloyl-D-alanyl-D-alanine + UDP + H(+). Its pathway is cell wall biogenesis; peptidoglycan biosynthesis. Its function is as follows. Cell wall formation. Catalyzes the transfer of a GlcNAc subunit on undecaprenyl-pyrophosphoryl-MurNAc-pentapeptide (lipid intermediate I) to form undecaprenyl-pyrophosphoryl-MurNAc-(pentapeptide)GlcNAc (lipid intermediate II). The sequence is that of UDP-N-acetylglucosamine--N-acetylmuramyl-(pentapeptide) pyrophosphoryl-undecaprenol N-acetylglucosamine transferase from Bordetella petrii (strain ATCC BAA-461 / DSM 12804 / CCUG 43448).